Consider the following 153-residue polypeptide: Large ribosomal subunit protein uL30 (153 aa).

It belongs to the universal ribosomal protein uL30 family. In terms of assembly, part of the 50S ribosomal subunit.

The protein is Large ribosomal subunit protein uL30 of Methanocorpusculum labreanum (strain ATCC 43576 / DSM 4855 / Z).